A 143-amino-acid polypeptide reads, in one-letter code: Endoribonuclease YbeY (143 aa).

The Zn(2+) site is built by His109, His113, and His119.

The protein belongs to the endoribonuclease YbeY family. Zn(2+) is required as a cofactor.

It localises to the cytoplasm. In terms of biological role, single strand-specific metallo-endoribonuclease involved in late-stage 70S ribosome quality control and in maturation of the 3' terminus of the 16S rRNA. The sequence is that of Endoribonuclease YbeY from Leptospira borgpetersenii serovar Hardjo-bovis (strain JB197).